A 380-amino-acid polypeptide reads, in one-letter code: L-lactate dehydrogenase (380 aa).

In terms of domain architecture, FMN hydroxy acid dehydrogenase spans 1–380; the sequence is MIISSASDYR…DASILVKAVA (380 aa). Tyr24 lines the substrate pocket. FMN is bound by residues Ser106 and Gln127. Tyr129 lines the substrate pocket. Position 155 (Thr155) interacts with FMN. Arg164 provides a ligand contact to substrate. Lys251 is a binding site for FMN. The active-site Proton acceptor is the His275. Arg278 is a binding site for substrate. 306–330 contributes to the FMN binding site; sequence DSGIRSGLDVVRMLALGAKGVLLGR.

The protein belongs to the FMN-dependent alpha-hydroxy acid dehydrogenase family. In terms of assembly, homotetramer. It depends on FMN as a cofactor.

It is found in the cell inner membrane. It catalyses the reaction (S)-lactate + A = pyruvate + AH2. In terms of biological role, catalyzes the conversion of L-lactate to pyruvate. Is coupled to the respiratory chain. The sequence is that of L-lactate dehydrogenase from Pseudomonas syringae pv. syringae (strain B728a).